A 527-amino-acid chain; its full sequence is Anthranilate synthase component 1 1 (527 aa).

An L-tryptophan-binding site is contributed by serine 52. Positions 53 to 72 (AEKTPASDPDGAFTPDTTTE) are disordered. 298 to 300 (PYM) contacts L-tryptophan. 333–334 (GT) contributes to the chorismate binding site. Glutamate 360 contributes to the Mg(2+) binding site. Residues tyrosine 448, arginine 468, 486-488 (GAG), and glycine 488 contribute to the chorismate site. Residue glutamate 501 coordinates Mg(2+).

It belongs to the anthranilate synthase component I family. In terms of assembly, tetramer of two components I and two components II. It depends on Mg(2+) as a cofactor.

It carries out the reaction chorismate + L-glutamine = anthranilate + pyruvate + L-glutamate + H(+). It functions in the pathway amino-acid biosynthesis; L-tryptophan biosynthesis; L-tryptophan from chorismate: step 1/5. The protein is Anthranilate synthase component 1 1 (trpE1) of Halobacterium salinarum (strain ATCC 700922 / JCM 11081 / NRC-1) (Halobacterium halobium).